A 55-amino-acid chain; its full sequence is uncharacterized protein (55 aa).

Residues 24 to 46 (LFIIFFTYSYYYCGFLQSFNYII) traverse the membrane as a helical segment.

Its subcellular location is the membrane. This is an uncharacterized protein from Dictyostelium discoideum (Social amoeba).